Consider the following 245-residue polypeptide: Carboxy-S-adenosyl-L-methionine synthase (245 aa).

S-adenosyl-L-methionine contacts are provided by residues Tyr-39, 64–66 (GSS), 117–118 (DI), and Arg-199.

This sequence belongs to the class I-like SAM-binding methyltransferase superfamily. Cx-SAM synthase family. Homodimer.

It carries out the reaction prephenate + S-adenosyl-L-methionine = carboxy-S-adenosyl-L-methionine + 3-phenylpyruvate + H2O. Functionally, catalyzes the conversion of S-adenosyl-L-methionine (SAM) to carboxy-S-adenosyl-L-methionine (Cx-SAM). This Desulfotalea psychrophila (strain LSv54 / DSM 12343) protein is Carboxy-S-adenosyl-L-methionine synthase.